A 390-amino-acid chain; its full sequence is MLPGVGVFGTSLTSRVIIPLLKDEGFSVKALWGRTQEEAEELAKEMSVPFYTNRIDDVLLHQDVDLVCINLPPPLTKQIAVKTLGIGKNVICDRTATPLDAFRMMSAAHYYPKLMSIMGNVLRFLPAFVKMKQLIQEGYVGELQVCEVQVHSGSLLGKKYNWSCDDLMGGGGLHSVGSYIIDLLTFLTSQKAVKVHGLLKTFVKQTDHIKGIRQITSDDFCTFQMVLEGGVCCTVTLNFNVPGEFKQDVIVVGSAGRLIVTGIDLYGQRNSSSDRELLLKDSTPVSNSLLPEKAFSDIPSPYLRGTIKMVQAVRQAFQDQDDRRTWDGRPLTMAATFDDCLYALCVVDTIKKSNQTGEWQNIVIMTEEPELSPAYLISEAMRRSRMSLYC.

The N-terminal stretch at 1–21 is a signal peptide; it reads MLPGVGVFGTSLTSRVIIPLL. Asparagine 161, asparagine 270, and asparagine 354 each carry an N-linked (GlcNAc...) asparagine glycan.

It belongs to the Gfo/Idh/MocA family. In terms of assembly, homodimer.

It localises to the secreted. Its function is as follows. Probably catalytically inactive enzyme. Does not bind NAD or NADP. In Xenopus tropicalis (Western clawed frog), this protein is Glucose-fructose oxidoreductase domain-containing protein 1 (gfod1).